Reading from the N-terminus, the 137-residue chain is Large ribosomal subunit protein uL16 (137 aa).

The protein belongs to the universal ribosomal protein uL16 family. Part of the 50S ribosomal subunit.

In terms of biological role, binds 23S rRNA and is also seen to make contacts with the A and possibly P site tRNAs. This chain is Large ribosomal subunit protein uL16, found in Streptococcus agalactiae serotype Ia (strain ATCC 27591 / A909 / CDC SS700).